A 160-amino-acid polypeptide reads, in one-letter code: SsrA-binding protein (160 aa).

Belongs to the SmpB family.

The protein localises to the cytoplasm. Functionally, required for rescue of stalled ribosomes mediated by trans-translation. Binds to transfer-messenger RNA (tmRNA), required for stable association of tmRNA with ribosomes. tmRNA and SmpB together mimic tRNA shape, replacing the anticodon stem-loop with SmpB. tmRNA is encoded by the ssrA gene; the 2 termini fold to resemble tRNA(Ala) and it encodes a 'tag peptide', a short internal open reading frame. During trans-translation Ala-aminoacylated tmRNA acts like a tRNA, entering the A-site of stalled ribosomes, displacing the stalled mRNA. The ribosome then switches to translate the ORF on the tmRNA; the nascent peptide is terminated with the 'tag peptide' encoded by the tmRNA and targeted for degradation. The ribosome is freed to recommence translation, which seems to be the essential function of trans-translation. The chain is SsrA-binding protein from Salmonella agona (strain SL483).